Consider the following 164-residue polypeptide: MPFELPDNLHPDCGPVAWLLGRWGGRGHGDYPTIEGFQYGQELVFTHDGRPFFHYFARAWIVDDAGEKVREAAQEAGFLRCKPEGRVELLLTHNTGFAEVWYGEAADGKLELTTDAVVRTESAKEYTGGKRLYGNVEGDLLYAYDMAAMGQPLQPHLWARLVRQ.

A GXWXGXG motif is present at residues 21-27 (GRWGGRG). Heme b contacts are provided by K130 and H156.

The protein belongs to the nitrobindin family. As to quaternary structure, homodimer. Heme b serves as cofactor.

The enzyme catalyses peroxynitrite = nitrate. Its pathway is nitrogen metabolism. Its function is as follows. Heme-binding protein able to scavenge peroxynitrite and to protect free L-tyrosine against peroxynitrite-mediated nitration, by acting as a peroxynitrite isomerase that converts peroxynitrite to nitrate. Therefore, this protein likely plays a role in peroxynitrite sensing and in the detoxification of reactive nitrogen and oxygen species (RNS and ROS, respectively). Is able to bind nitric oxide (NO) in vitro, but may act as a sensor of peroxynitrite levels in vivo. This chain is Peroxynitrite isomerase, found in Nocardioides sp. (strain ATCC BAA-499 / JS614).